A 432-amino-acid chain; its full sequence is Enolase (432 aa).

Glutamine 166 is a (2R)-2-phosphoglycerate binding site. The active-site Proton donor is glutamate 208. Aspartate 245, glutamate 291, and aspartate 318 together coordinate Mg(2+). Lysine 343, arginine 372, serine 373, and lysine 394 together coordinate (2R)-2-phosphoglycerate. Catalysis depends on lysine 343, which acts as the Proton acceptor.

This sequence belongs to the enolase family. Mg(2+) serves as cofactor.

It localises to the cytoplasm. The protein resides in the secreted. Its subcellular location is the cell surface. It catalyses the reaction (2R)-2-phosphoglycerate = phosphoenolpyruvate + H2O. Its pathway is carbohydrate degradation; glycolysis; pyruvate from D-glyceraldehyde 3-phosphate: step 4/5. Catalyzes the reversible conversion of 2-phosphoglycerate (2-PG) into phosphoenolpyruvate (PEP). It is essential for the degradation of carbohydrates via glycolysis. The sequence is that of Enolase from Leptospira borgpetersenii serovar Hardjo-bovis (strain L550).